A 337-amino-acid polypeptide reads, in one-letter code: Glutathione transferase 3 (337 aa).

Residues 1–239 (MPTKSTFSRW…NKYQYTLDFC (239 aa)) lie on the Cytoplasmic side of the membrane. A phosphoserine mark is found at Ser-66, Ser-72, Ser-99, and Ser-116. Positions 66–95 (SMTVDQSKDERNEYGSGSGNGSGSGSCDTA) are disordered. Residues 107-132 (KEDDDEKPQSGDETSATKPLSSRNAN) form a disordered region. A compositionally biased stretch (polar residues) spans 117–132 (GDETSATKPLSSRNAN). A helical transmembrane segment spans residues 240–260 (LPILTWLLFFRGIPTLVSYYI). The Perinuclear space portion of the chain corresponds to 261–313 (NFIRYDLNIELDPMTFNLTKFLISLAIFKTCNNKNIDFHSFRCVNQLWTQLCT). Residues 314–336 (VNRSLGMVPLVFSMVSCLLTLYV) traverse the membrane as a helical segment. A topological domain (cytoplasmic) is located at residue Leu-337.

The protein resides in the nucleus membrane. The polypeptide is Glutathione transferase 3 (GTT3) (Saccharomyces cerevisiae (strain ATCC 204508 / S288c) (Baker's yeast)).